A 354-amino-acid chain; its full sequence is Methionine import ATP-binding protein MetN (354 aa).

The 243-residue stretch at 8–250 folds into the ABC transporter domain; the sequence is LDHIDITFHQ…PKEALTQEFI (243 aa). 42–49 lines the ATP pocket; sequence GYSGAGKS.

This sequence belongs to the ABC transporter superfamily. Methionine importer (TC 3.A.1.24) family. The complex is composed of two ATP-binding proteins (MetN), two transmembrane proteins (MetI) and a solute-binding protein (MetQ).

The protein localises to the cell membrane. The catalysed reaction is L-methionine(out) + ATP + H2O = L-methionine(in) + ADP + phosphate + H(+). It carries out the reaction D-methionine(out) + ATP + H2O = D-methionine(in) + ADP + phosphate + H(+). Part of the ABC transporter complex MetNIQ involved in methionine import. Responsible for energy coupling to the transport system. This is Methionine import ATP-binding protein MetN from Streptococcus pyogenes serotype M4 (strain MGAS10750).